Reading from the N-terminus, the 139-residue chain is Putative pre-16S rRNA nuclease (139 aa).

This sequence belongs to the YqgF nuclease family.

The protein localises to the cytoplasm. In terms of biological role, could be a nuclease involved in processing of the 5'-end of pre-16S rRNA. The polypeptide is Putative pre-16S rRNA nuclease (Streptococcus pyogenes serotype M2 (strain MGAS10270)).